The sequence spans 208 residues: Probable GTP-binding protein EngB (208 aa).

Residues 23-205 (LTSEMVILGR…RQTLLKYLLT (183 aa)) form the EngB-type G domain. Residues 31-38 (GRSNVGKS), 57-61 (GKTRL), 84-87 (DLPG), 154-157 (TKFD), and 182-184 (FNA) contribute to the GTP site. Positions 38 and 59 each coordinate Mg(2+).

It belongs to the TRAFAC class TrmE-Era-EngA-EngB-Septin-like GTPase superfamily. EngB GTPase family. The cofactor is Mg(2+).

Its function is as follows. Necessary for normal cell division and for the maintenance of normal septation. The sequence is that of Probable GTP-binding protein EngB from Helicobacter pylori (strain HPAG1).